Reading from the N-terminus, the 303-residue chain is Probable WRKY transcription factor 30 (303 aa).

The disordered stretch occupies residues 65-92; it reads DQVSQGGGSPKSDDSDQEPLVIKSSKKS. The WRKY DNA-binding region spans 107-175; sequence GVDRTLDDGF…YRGIHSCSQA (69 aa). A compositionally biased stretch (low complexity) spans 266 to 278; that stretch reads SGSASHSASNSPS. Residues 266 to 291 form a disordered region; the sequence is SGSASHSASNSPSTVPLESPFESYDP.

This sequence belongs to the WRKY group III family. As to quaternary structure, interacts with WRKY53, WRKY54 and WRKY70.

It is found in the nucleus. Its function is as follows. Transcription factor. Interacts specifically with the W box (5'-(T)TGAC[CT]-3'), a frequently occurring elicitor-responsive cis-acting element. This is Probable WRKY transcription factor 30 from Arabidopsis thaliana (Mouse-ear cress).